A 323-amino-acid polypeptide reads, in one-letter code: Breast cancer metastasis-suppressor 1-like protein-A (323 aa).

A compositionally biased stretch (basic and acidic residues) spans M1 to E15. The disordered stretch occupies residues M1–C52. Acidic residues predominate over residues M16–D51. 2 coiled-coil regions span residues E50–R81 and Q156–E178.

The protein belongs to the BRMS1 family.

The protein resides in the nucleus. Its function is as follows. Involved in the histone deacetylase (HDAC1)-dependent transcriptional repression activity. This chain is Breast cancer metastasis-suppressor 1-like protein-A (brms1la), found in Danio rerio (Zebrafish).